A 294-amino-acid polypeptide reads, in one-letter code: Keratin-like protein KRT222 (294 aa).

Residues 1-150 form the IF rod domain; sequence MELSQLLNEI…RLLEQEEIRY (150 aa). Residues 1–151 adopt a coiled-coil conformation; that stretch reads MELSQLLNEI…LLEQEEIRYY (151 aa).

It belongs to the intermediate filament family.

The polypeptide is Keratin-like protein KRT222 (Krt222) (Mus musculus (Mouse)).